We begin with the raw amino-acid sequence, 558 residues long: Putative cation/proton antiporter YbaL (558 aa).

Over 1–3 (MHH) the chain is Periplasmic. A helical transmembrane segment spans residues 4 to 24 (ATPLITTIVGGLVLAFILGML). The Cytoplasmic portion of the chain corresponds to 25 to 31 (ANKLRIS). A helical membrane pass occupies residues 32-52 (PLVGYLLAGVLAGPFTPGFVA). Residues 53–55 (DTK) lie on the Periplasmic side of the membrane. The helical transmembrane segment at 56-76 (LAPELAELGVILLMFGVGLHF) threads the bilayer. The Cytoplasmic segment spans residues 77–85 (SLKDLMAVK). A helical membrane pass occupies residues 86 to 106 (AIAIPGAIAQIAVATLLGMAL). Over 107–112 (SAVLGW) the chain is Periplasmic. Residues 113 to 133 (SLMTGIVFGLCLSTASTVVLL) form a helical membrane-spanning segment. The Cytoplasmic segment spans residues 134–148 (RALEERQLIDSQRGQ). The chain crosses the membrane as a helical span at residues 149–169 (IAIGWLIVEDLVMVLTLVLLP). Topologically, residues 170 to 185 (AVAGMMEQGDVGFATL) are periplasmic. The chain crosses the membrane as a helical span at residues 186 to 206 (AVDMGITIGKVIAFIAIMMLV). The Cytoplasmic segment spans residues 207-225 (GRRLVPWIMARSAATGSRE). Residues 226 to 246 (LFTLSVLALALGVAFGAVELF) traverse the membrane as a helical segment. Position 247 (Asp247) is a topological domain, periplasmic. A helical transmembrane segment spans residues 248 to 268 (VSFALGAFFAGMVLNESELSH). Residues 269–279 (RAAHDTLPLRD) are Cytoplasmic-facing. A helical transmembrane segment spans residues 280 to 300 (AFAVLFFVSVGMLFDPLILIQ). Topologically, residues 301–303 (QPL) are periplasmic. The helical transmembrane segment at 304-324 (AVLATLAIILFGKSLAAFFLV) threads the bilayer. The Cytoplasmic segment spans residues 325–336 (RLFGHSQRTALT). A helical membrane pass occupies residues 337–357 (IAASLAQIGEFAFILAGLGMA). Over 358–367 (LNLLPQAGQN) the chain is Periplasmic. The helical transmembrane segment at 368 to 388 (LVLAGAILSIMLNPVLFALLE) threads the bilayer. The Cytoplasmic portion of the chain corresponds to 389–558 (KYLAKTETLE…TPPAGEVVTG (170 aa)). Residues 417–534 (CNHALLVGYG…TERGANQVVM (118 aa)) enclose the RCK N-terminal domain. AMP contacts are provided by residues 427–428 (RV), 447–448 (ET), 467–468 (NA), Glu494, and Arg514.

The protein belongs to the monovalent cation:proton antiporter 2 (CPA2) transporter (TC 2.A.37) family.

It localises to the cell inner membrane. This is Putative cation/proton antiporter YbaL (ybaL) from Escherichia coli (strain K12).